A 295-amino-acid chain; its full sequence is Small ribosomal subunit protein uS2 (295 aa).

The residue at position 2 (Ser2) is an N-acetylserine. Position 43 is a phosphoserine (Ser43). Lys52 carries the N6-acetyllysine modification. The segment at Thr54–Gln113 is interaction with PPP1R16B. The residue at position 89 (Lys89) is an N6-acetyllysine; alternate. A Glycyl lysine isopeptide (Lys-Gly) (interchain with G-Cter in SUMO2); alternate cross-link involves residue Lys89. Thr97 carries the post-translational modification Phosphothreonine. Laminin-binding regions lie at residues Ile161–Arg180 and Arg205–Gly229. [DE]-W-[ST] repeat units follow at residues Glu230–Thr232, Asp247–Ser249, Asp266–Ser268, Asp275–Ser277, and Glu293–Ser295. Residues Gln242–Ser295 are laminin-binding. Residues Asp266–Ser295 form a disordered region.

The protein belongs to the universal ribosomal protein uS2 family. In terms of assembly, monomer (37LRP) and homodimer (67LR). Component of the small ribosomal subunit. Mature ribosomes consist of a small (40S) and a large (60S) subunit. The 40S subunit contains about 33 different proteins and 1 molecule of RNA (18S). The 60S subunit contains about 49 different proteins and 3 molecules of RNA (28S, 5.8S and 5S). Interacts with RPS21. Interacts with several laminins including at least LAMB1. Interacts with MDK. The mature dimeric form interacts with PPP1R16B (via its fourth ankyrin repeat). Interacts with PPP1CA only in the presence of PPP1R16B. In terms of processing, acylated. Acylation may be a prerequisite for conversion of the monomeric 37 kDa laminin receptor precursor (37LRP) to the mature dimeric 67 kDa laminin receptor (67LR), and may provide a mechanism for membrane association. Cleaved by stromelysin-3 (ST3) at the cell surface. Cleavage by stromelysin-3 may be a mechanism to alter cell-extracellular matrix interactions.

The protein localises to the cell membrane. The protein resides in the cytoplasm. It localises to the nucleus. Its function is as follows. Required for the assembly and/or stability of the 40S ribosomal subunit. Required for the processing of the 20S rRNA-precursor to mature 18S rRNA in a late step of the maturation of 40S ribosomal subunits. Also functions as a cell surface receptor for laminin. Plays a role in cell adhesion to the basement membrane and in the consequent activation of signaling transduction pathways. May play a role in cell fate determination and tissue morphogenesis. Also acts as a receptor for several other ligands, including the pathogenic prion protein, viruses, and bacteria. Acts as a PPP1R16B-dependent substrate of PPP1CA. This chain is Small ribosomal subunit protein uS2, found in Sus scrofa (Pig).